A 360-amino-acid polypeptide reads, in one-letter code: Alpha-2-macroglobulin receptor-associated protein (360 aa).

Residues 1–33 form the signal peptide; the sequence is MAPLRDRVSTLPRLQLLVLLLLPLLLVPQPIAG. Phosphoserine occurs at positions 53 and 138. The stretch at 222–302 forms a coiled coil; it reads SKHSELKDRL…KHNHYQKQLE (81 aa). The interval 240–356 is LDL receptor binding; the sequence is RLRKVSHQGY…DLSSRVSRAR (117 aa). N-linked (GlcNAc...) asparagine glycosylation is present at N271. The Prevents secretion from ER motif lies at 357–360; that stretch reads HNEL.

It belongs to the alpha-2-MRAP family. In terms of assembly, interacts with the LRP1/alpha-2-macroglobulin receptor heavy and light chains; the interaction is transient and coincides with a reduction of ligand binding by the receptor. Interacts with LRP2/glycoprotein 330. Interacts with LRP1B; binding is followed by internalization and degradation. Interacts with LDLR. Interacts with SORL1. Interacts with LRP1; this interaction is followed by rapid internalization. In terms of processing, N-glycosylated.

It localises to the rough endoplasmic reticulum lumen. Its subcellular location is the endoplasmic reticulum-Golgi intermediate compartment lumen. It is found in the golgi apparatus. The protein localises to the cis-Golgi network. The protein resides in the golgi apparatus lumen. It localises to the endosome lumen. Its subcellular location is the cell surface. Its function is as follows. Molecular chaperone for LDL receptor-related proteins that may regulate their ligand binding activity along the secretory pathway. This is Alpha-2-macroglobulin receptor-associated protein (Lrpap1) from Rattus norvegicus (Rat).